The chain runs to 739 residues: Exocyst complex component 3-like protein (739 aa).

Disordered regions lie at residues 1 to 21 and 698 to 718; these read MDSKIQPTLRPGSSCPRPEWP and AALSSLQAGPPPSPSTGRRAL. The mediates interaction with EXOC2, EXOC4 and EXOC5 stretch occupies residues 1–370; the sequence is MDSKIQPTLR…DVSQLEPLLT (370 aa).

This sequence belongs to the SEC6 family. As to quaternary structure, interacts with EXOC2, EXOC4 and EXOC5; may be part of the exocyst. In terms of tissue distribution, ubiquitously expressed.

The protein localises to the cytoplasmic vesicle. The protein resides in the secretory vesicle. As part of the exocyst, may play a role in regulated exocytosis of insulin granules. This is Exocyst complex component 3-like protein (Exoc3l1) from Mus musculus (Mouse).